Reading from the N-terminus, the 859-residue chain is ATP-dependent RNA helicase DDX24 (859 aa).

Residue Lys17 is modified to N6-acetyllysine. Ser60 bears the Phosphoserine mark. A disordered region spans residues 61-175 (PAKNPSSLFS…SQSTAAKVPK (115 aa)). Lys71 carries the N6-acetyllysine modification. 2 positions are modified to phosphoserine: Ser82 and Ser94. Residues 82–91 (SEEEEEEEGE) are compositionally biased toward acidic residues. The span at 95-105 (PKKKIKLKKSK) shows a compositional bias: basic residues. The span at 106-115 (NVATEGTSTQ) shows a compositional bias: polar residues. The Q motif motif lies at 192–220 (SAWKDLFVPRPVLRALSFLGFSAPTPIQV). The 305-residue stretch at 224 to 528 (APAIRDKLDI…RILHKKHTKK (305 aa)) folds into the Helicase ATP-binding domain. Residue 237–244 (AETGSGKT) coordinates ATP. The disordered stretch occupies residues 262 to 374 (NAAPPPSNTE…QTGNLKQELD (113 aa)). Residues 277-293 (TRPEAGAETRSPGKAEA) show a composition bias toward basic and acidic residues. Phosphoserine occurs at positions 287 and 295. Residues 294–304 (ESDALPDDTVI) are compositionally biased toward acidic residues. Thr302 carries the phosphothreonine modification. A Glycyl lysine isopeptide (Lys-Gly) (interchain with G-Cter in SUMO2) cross-link involves residue Lys370. The short motif at 471-474 (DEAD) is the DEAD box element. Positions 578-723 (YLYYFLMQYP…LFPVQTKYMD (146 aa)) constitute a Helicase C-terminal domain. Residues Lys624, Lys808, and Lys825 each participate in a glycyl lysine isopeptide (Lys-Gly) (interchain with G-Cter in SUMO2) cross-link. Polar residues-rich tracts occupy residues 799–814 (PLFTESQKTKYPTQSG) and 823–834 (PSKSESALSCLS). A disordered region spans residues 799-859 (PLFTESQKTK…EQPQPSTSAN (61 aa)).

This sequence belongs to the DEAD box helicase family. DDX24/MAK5 subfamily. As to quaternary structure, interacts with FADD. Interacts with RIPK1; this interaction disrupts RLR signaling activation of IFN-dependent transcription factor IRF7. Interacts with NIP7. Interacts with EP300; this interaction prevents TP53 acetylation mediated by EP300. Ubiquitinated by MDM2 without targeting DDX24 for proteasomal degradation. Instead, polyubiquitylated DDX24 promotes interaction with NIP7, a component of pre-rRNP processing complex, and associates with pre-rRNA molecules and pre-ribosomal particles.

Its subcellular location is the cytoplasm. The protein resides in the nucleus. It catalyses the reaction ATP + H2O = ADP + phosphate + H(+). Functionally, ATP-dependent RNA helicase that plays a role in various aspects of RNA metabolism including pre-mRNA splicing and is thereby involved in different biological processes such as cell cycle regulation or innate immunity. Plays an inhibitory role in TP53 transcriptional activity and subsequently in TP53 controlled cell growth arrest and senescence by inhibiting its EP300 mediated acetylation. Negatively regulates cytosolic RNA-mediated innate immune signaling at least in part by affecting RIPK1/IRF7 interactions. Alternatively, possesses antiviral activity by recognizing gammaherpesvirus transcripts in the context of lytic reactivation. Plays an essential role in cell cycle regulation in vascular smooth muscle cells by interacting with and regulating FANCA (Fanconi anemia complementation group A) mRNA. This is ATP-dependent RNA helicase DDX24 (DDX24) from Pongo abelii (Sumatran orangutan).